Consider the following 1065-residue polypeptide: Leucine-rich repeats and immunoglobulin-like domains protein 2 (1065 aa).

A signal peptide spans 1–40 (MAPAPLGVPEEQLLGCRSRVLSRLLFIAQTALLLLPAAGA). The region spanning 41 to 75 (GLCPAPCSCRIPLLDCSRRKLPAPSWRALSGLLPP) is the LRRNT domain. Topologically, residues 41-807 (GLCPAPCSCR…HEDDGWTTVG (767 aa)) are extracellular. 15 LRR repeats span residues 76–97 (DTAI…LESQ), 98–119 (TLQE…GEPT), 121–142 (NITL…ALQF), 145–166 (ALES…SFPR), 168–189 (QLKY…CFDN), 193–214 (SLLV…IFKL), 216–237 (HLQF…TFQG), 240–261 (SLRS…AFFG), 264–285 (NMEE…WLYG), 288–309 (MLQQ…AWEF), 312–333 (RLSE…AFVG), 336–357 (LLER…VFRF), 360–382 (NLQT…SEAF), 387–408 (SLTK…AFIG), and 411–432 (SLEH…AFSQ). A glycan (N-linked (GlcNAc...) asparagine) is linked at Asn-91. An N-linked (GlcNAc...) asparagine glycan is attached at Asn-121. N-linked (GlcNAc...) asparagine glycans are attached at residues Asn-173 and Asn-189. The N-linked (GlcNAc...) asparagine glycan is linked to Asn-274. Asn-441, Asn-468, Asn-514, Asn-571, and Asn-589 each carry an N-linked (GlcNAc...) asparagine glycan. The LRRCT domain occupies 443-494 (SSLLCDCHLKWLLQWLVDNNFQHSVNVSCAHPEWLAGQSILNVDLKDFVCDD). Ig-like C2-type domains lie at 498 to 597 (PQIR…AKLT), 602 to 691 (PSFL…ASLT), and 696 to 785 (PSFI…NVIS). Cys-519 and Cys-580 form a disulfide bridge. Cysteines 623 and 675 form a disulfide. Residues Asn-687 and Asn-728 are each glycosylated (N-linked (GlcNAc...) asparagine). The cysteines at positions 717 and 766 are disulfide-linked. Residues 808 to 828 (IVIIVVVCCVVGTSLIWVIVI) form a helical membrane-spanning segment. At 829 to 1065 (YHMRRKNEDY…RNIQDGSEGT (237 aa)) the chain is on the cytoplasmic side. Phosphotyrosine is present on Tyr-906. Disordered stretches follow at residues 963–990 (SANR…QMSG) and 1003–1040 (ELGL…ASSM). Residues 974 to 983 (NHERISEKKL) show a composition bias toward basic and acidic residues. Positions 1013 to 1024 (QQPVHESPQLHQ) are enriched in polar residues.

In terms of tissue distribution, detected in all tissues analyzed.

Its subcellular location is the cell membrane. It is found in the cytoplasm. The chain is Leucine-rich repeats and immunoglobulin-like domains protein 2 (LRIG2) from Homo sapiens (Human).